A 446-amino-acid chain; its full sequence is Na(+)-translocating NADH-quinone reductase subunit A (446 aa).

This sequence belongs to the NqrA family. Composed of six subunits; NqrA, NqrB, NqrC, NqrD, NqrE and NqrF.

It catalyses the reaction a ubiquinone + n Na(+)(in) + NADH + H(+) = a ubiquinol + n Na(+)(out) + NAD(+). Functionally, NQR complex catalyzes the reduction of ubiquinone-1 to ubiquinol by two successive reactions, coupled with the transport of Na(+) ions from the cytoplasm to the periplasm. NqrA to NqrE are probably involved in the second step, the conversion of ubisemiquinone to ubiquinol. The chain is Na(+)-translocating NADH-quinone reductase subunit A from Aliivibrio salmonicida (strain LFI1238) (Vibrio salmonicida (strain LFI1238)).